A 1738-amino-acid chain; its full sequence is Complement C4-B (1738 aa).

The N-terminal stretch at 1 to 19 is a signal peptide; that stretch reads MRLLWGLAWVFSFCASSLQ. An intrachain disulfide couples cysteine 66 to cysteine 95. A glycan (N-linked (GlcNAc...) asparagine) is linked at asparagine 224. Cysteine 633 and cysteine 667 are joined by a disulfide. Positions 674-677 are excised as a propeptide; the sequence is RQKR. Cystine bridges form between cysteine 700–cysteine 726, cysteine 701–cysteine 733, and cysteine 714–cysteine 734. Residues 700 to 734 form the Anaphylatoxin-like domain; it reads CCQDGMTKLPMKRTCEQRAARVPQQACREPFLSCC. N-linked (GlcNAc...) asparagine glycosylation occurs at asparagine 743. A cross-link (isoglutamyl cysteine thioester (Cys-Gln)) is located at residues 1006–1009; that stretch reads CAEQ. N-linked (GlcNAc...) asparagine glycans are attached at residues asparagine 1324 and asparagine 1387. Sulfotyrosine is present on residues tyrosine 1413, tyrosine 1416, and tyrosine 1417. The propeptide occupies 1444–1447; sequence RRRR. Cystine bridges form between cysteine 1465/cysteine 1529, cysteine 1577/cysteine 1582, cysteine 1589/cysteine 1667, cysteine 1612/cysteine 1736, and cysteine 1712/cysteine 1721. The NTR domain maps to 1589–1736; sequence CPRLLRSLER…FLMEFSSRGC (148 aa).

As to quaternary structure, in absence of complement activation, circulates in blood as a disulfide-linked trimer of an alpha, beta and gamma chain. Complement C4b is composed of complement C4b-A, complement C4 beta and complement C4 gamma chains that are associated via disulfide bonds. Non-enzymatic component of the C3 convertase, also named C4bC2b, composed of the serine protease complement C2b (C2), as well as complement C4b. Non-enzymatic component of the C5 convertase, also named C4bC2bC3b, composed of the serine protease complement C2b (C2), complement C3b, as well as complement C4b. Post-translationally, prior to secretion, the single-chain precursor is enzymatically cleaved by plasminogen (PLG) to yield non-identical chains alpha, beta and gamma. During activation of the complement systems, the alpha chain is cleaved into C4a and C4b by different proteases depending on the complement pathway: C4b stays linked to the beta and gamma chains, while C4a is released in the plasma. The alpha chain is cleaved by C1S to generate C4a and C4b following activation by the classical complement system. The alpha chain is cleaved to generate C4a and C4b by MASP2 following activation by the lectin complement system. The alpha chain is cleaved by GZMK to generate C4a and C4b following activation by the GZMK complement system. Further degradation of C4b by C1 into the inactive fragments C4c and C4d blocks the generation of C3 convertase. The proteolytic cleavages often are incomplete so that many structural forms can be found in plasma. Upon activation, the internal thioester bond reacts with carbohydrate antigens on the target surface to form amide or ester bonds, leading to covalent association with the surface of pathogens. In terms of processing, complement C4b interacts with complement C3b via a thioester linkage.

It localises to the secreted. The protein localises to the cell surface. Precursor of non-enzymatic components of the classical, lectin and GZMK complement pathways, which consist in a cascade of proteins that leads to phagocytosis and breakdown of pathogens and signaling that strengthens the adaptive immune system. In terms of biological role, non-enzymatic component of C3 and C5 convertases. Generated following cleavage by complement proteases (C1S, MASP2 or GZMK, depending on the complement pathway), it covalently attaches to the surface of pathogens, where it acts as an opsonin that marks the surface of antigens for removal. It then recruits the serine protease complement C2b to form the C3 and C5 convertases, which cleave and activate C3 and C5, respectively, the next components of the complement pathways. Complement C4b-A isotype is responsible for effective binding to form amide bonds with immune aggregates or protein antigens, while complement C4b-B isotype catalyzes the transacylation of the thioester carbonyl group to form ester bonds with carbohydrate antigens. Its function is as follows. Putative humoral mediator released following cleavage by complement proteases (C1S, MASP2 or GZMK, depending on the complement pathway). While it is strongly similar to anaphylatoxins, its role is unclear. Was reported to act as a mediator of local inflammatory process; however these effects were probably due to contamination with C3a and/C5a anaphylatoxins in biological assays. The sequence is that of Complement C4-B from Mus musculus (Mouse).